A 1578-amino-acid polypeptide reads, in one-letter code: FH1/FH2 domain-containing protein 3 (1578 aa).

The region spanning 18-405 (NSTNFPEPSR…DLCEKDEEEE (388 aa)) is the GBD/FH3 domain. Disordered regions lie at residues 324-518 (HEDG…DKLP), 535-824 (SPLL…GVNG), 915-942 (VGRGAISPDVESQDKVPDTPPAQLKTES), 979-1013 (LGHREAPGPPPPPPPTFLGLPPPPPPPLLDSVPPP), 1418-1462 (QQKQ…YAED), 1490-1514 (RTRSRASRGSTSSWTMGTEESPSVT), and 1528-1565 (SATQVPSQRVVPRERKRSRANRKSLRRTLKSGLTPEEA). Residues Ser-345 and Ser-376 each carry the phosphoserine modification. Over residues 368–383 (IQNIKSPLSAPTSPCS) the composition is skewed to polar residues. Acidic residues predominate over residues 399-425 (EKDEEEEEEEEQPITEPNSEEEREDDA). Residue Thr-413 is modified to Phosphothreonine. Over residues 434–446 (ASSASGQSSPGKD) the composition is skewed to low complexity. Residues 453–473 (ALHTTSSPTSQGRWLSASTAA) are compositionally biased toward polar residues. Residues 553 to 583 (SNFSSNSFQSSRPSPGPSGSPSYASSFSSPQ) show a composition bias toward low complexity. Residues 584-598 (DTRSSPSGLLTSSFR) show a composition bias toward polar residues. A coiled-coil region spans residues 597-645 (FRQHQESLAAERERRRQEREERLQRIEREERNKFNREYLDKREEQRQAR). The segment covering 599–651 (QHQESLAAERERRRQEREERLQRIEREERNKFNREYLDKREEQRQARGERYKY) has biased composition (basic and acidic residues). 2 stretches are compositionally biased toward low complexity: residues 675-684 (DLSLDLSLPA) and 692-701 (SSQSPSADSQ). Positions 751–761 (SQEEPVLELEP) are enriched in acidic residues. The segment covering 762–782 (EERASLSEKERQNEEVNERDN) has biased composition (basic and acidic residues). Residues 784 to 793 (SASSISSSSS) show a composition bias toward low complexity. A compositionally biased stretch (basic and acidic residues) spans 795–809 (LEREEKEDKLSEDRA). Ser-921 bears the Phosphoserine mark. Residue Thr-933 is modified to Phosphothreonine. Residues 985-1013 (PGPPPPPPPTFLGLPPPPPPPLLDSVPPP) show a composition bias toward pro residues. The region spanning 985–1016 (PGPPPPPPPTFLGLPPPPPPPLLDSVPPPPVP) is the FH1 domain. One can recognise an FH2 domain in the interval 1039 to 1435 (GQPAFTKKKK…HRERNKTRGK (397 aa)). The segment covering 1420-1434 (KQKRANHRERNKTRG) has biased composition (basic residues). Residues 1444–1456 (SGSSPAAPSQPQG) show a composition bias toward low complexity. Positions 1515 to 1547 (DDAADEIMDRIVKSATQVPSQRVVPRERKRSRA) constitute a DAD domain. Positions 1541–1556 (ERKRSRANRKSLRRTL) are enriched in basic residues.

This sequence belongs to the formin homology family. Interacts with nestin/NES-based interfilament (IF). Interacts with SQSTM1. As to expression, expressed in the heart, including left ventricle, kidney, brain and skeletal muscle, including soleus and tibialis anterior (at protein level).

It localises to the cytoplasm. The protein resides in the cytoskeleton. It is found in the myofibril. Its subcellular location is the sarcomere. The protein localises to the z line. In terms of biological role, may play a role in actin filament polymerization in cardiomyocytes. Actin-organizing protein that may cause stress fiber formation together with cell elongation. This chain is FH1/FH2 domain-containing protein 3 (Fhod3), found in Mus musculus (Mouse).